The following is a 420-amino-acid chain: Serine hydroxymethyltransferase (420 aa).

(6S)-5,6,7,8-tetrahydrofolate is bound by residues Leu123 and Gly127 to Leu129. Lys232 carries the N6-(pyridoxal phosphate)lysine modification. Ser357–Phe359 lines the (6S)-5,6,7,8-tetrahydrofolate pocket.

Belongs to the SHMT family. As to quaternary structure, homodimer. The cofactor is pyridoxal 5'-phosphate.

The protein resides in the cytoplasm. The catalysed reaction is (6R)-5,10-methylene-5,6,7,8-tetrahydrofolate + glycine + H2O = (6S)-5,6,7,8-tetrahydrofolate + L-serine. It participates in one-carbon metabolism; tetrahydrofolate interconversion. Its pathway is amino-acid biosynthesis; glycine biosynthesis; glycine from L-serine: step 1/1. In terms of biological role, catalyzes the reversible interconversion of serine and glycine with tetrahydrofolate (THF) serving as the one-carbon carrier. This reaction serves as the major source of one-carbon groups required for the biosynthesis of purines, thymidylate, methionine, and other important biomolecules. Also exhibits THF-independent aldolase activity toward beta-hydroxyamino acids, producing glycine and aldehydes, via a retro-aldol mechanism. This is Serine hydroxymethyltransferase from Streptococcus pyogenes serotype M12 (strain MGAS2096).